The following is an 840-amino-acid chain: Wings apart-like protein 2 (840 aa).

Disordered regions lie at residues 1-37, 56-78, and 532-594; these read MMER…EPVD, SDND…FGSN, and FDLE…DHHV. Over residues 546-557 the composition is skewed to basic residues; that stretch reads KQKKSKGQKRKG. Residues 558–567 show a composition bias toward basic and acidic residues; it reads SYRDKKDERS. The span at 569-585 shows a compositional bias: polar residues; the sequence is QLFSSQEESNHGLNSQE. The WAPL domain maps to 764–819; that stretch reads KEAEKMIVEAYSALLLAFLSTESRSIRNAIRDYLPKRDMAILVPVLDRFVAFHTTL.

This sequence belongs to the WAPL family. As to quaternary structure, interacts with the cohesin complex throughout the cell cycle. In terms of tissue distribution, expressed in roots, leaves, buds and siliques.

It is found in the nucleus. The protein resides in the chromosome. In terms of biological role, regulator of sister chromatid cohesion in meiosis which negatively regulates cohesin association with chromatin, acting as an antagonist of CTF7. Cohesion ensures that chromosome partitioning is accurate in both meiotic and mitotic cells and plays an important role in DNA repair. Essential for the prophase removal of cohesin during meiosis thus determining the timely release of meiotic cohesion. Important for proper spindle attachment and assembly during meiosis. Helps to prevent abnormal centromere association during prophase I in meiocytes. Required for early embryonic patterning. Also involved in chromosome segregation during mitosis. The sequence is that of Wings apart-like protein 2 from Arabidopsis thaliana (Mouse-ear cress).